The following is a 115-amino-acid chain: Arsenic resistance transcriptional regulator ArsR2 (115 aa).

The HTH arsR-type domain maps to 1 to 90; sequence MITPPDVFKS…EMLQVTLQAN (90 aa). 2 residues coordinate arsenite: C30 and C32. Positions 31–54 form a DNA-binding region, H-T-H motif; sequence VCELMCALNDSQPKISRHLAQLRS.

Homodimer.

It localises to the cytoplasm. In terms of biological role, binds arsenite and regulates the expression of arsenic efflux pumps. In vitro, also binds antimony and bismuth, but not arsenate. This is Arsenic resistance transcriptional regulator ArsR2 from Pseudomonas putida (strain ATCC 47054 / DSM 6125 / CFBP 8728 / NCIMB 11950 / KT2440).